We begin with the raw amino-acid sequence, 296 residues long: Phosphatidylserine decarboxylase proenzyme (296 aa).

Catalysis depends on charge relay system; for autoendoproteolytic cleavage activity residues aspartate 113, histidine 169, and serine 256. Residue serine 256 is the Schiff-base intermediate with substrate; via pyruvic acid; for decarboxylase activity of the active site. Pyruvic acid (Ser); by autocatalysis is present on serine 256.

It belongs to the phosphatidylserine decarboxylase family. PSD-B subfamily. Prokaryotic type II sub-subfamily. As to quaternary structure, heterodimer of a large membrane-associated beta subunit and a small pyruvoyl-containing alpha subunit. It depends on pyruvate as a cofactor. In terms of processing, is synthesized initially as an inactive proenzyme. Formation of the active enzyme involves a self-maturation process in which the active site pyruvoyl group is generated from an internal serine residue via an autocatalytic post-translational modification. Two non-identical subunits are generated from the proenzyme in this reaction, and the pyruvate is formed at the N-terminus of the alpha chain, which is derived from the carboxyl end of the proenzyme. The autoendoproteolytic cleavage occurs by a canonical serine protease mechanism, in which the side chain hydroxyl group of the serine supplies its oxygen atom to form the C-terminus of the beta chain, while the remainder of the serine residue undergoes an oxidative deamination to produce ammonia and the pyruvoyl prosthetic group on the alpha chain. During this reaction, the Ser that is part of the protease active site of the proenzyme becomes the pyruvoyl prosthetic group, which constitutes an essential element of the active site of the mature decarboxylase.

It is found in the cell membrane. The catalysed reaction is a 1,2-diacyl-sn-glycero-3-phospho-L-serine + H(+) = a 1,2-diacyl-sn-glycero-3-phosphoethanolamine + CO2. It participates in phospholipid metabolism; phosphatidylethanolamine biosynthesis; phosphatidylethanolamine from CDP-diacylglycerol: step 2/2. Its function is as follows. Catalyzes the formation of phosphatidylethanolamine (PtdEtn) from phosphatidylserine (PtdSer). The protein is Phosphatidylserine decarboxylase proenzyme of Clostridium botulinum (strain Alaska E43 / Type E3).